Here is a 242-residue protein sequence, read N- to C-terminus: Uridylate kinase (242 aa).

Position 12 to 15 (12 to 15 (KLSG)) interacts with ATP. The involved in allosteric activation by GTP stretch occupies residues 20–25 (GQKGYG). Residue G54 participates in UMP binding. Residues G55 and R59 each coordinate ATP. UMP is bound by residues D74 and 135 to 142 (TGNPYFST). 3 residues coordinate ATP: Q163, Y168, and D171.

Belongs to the UMP kinase family. In terms of assembly, homohexamer.

It localises to the cytoplasm. It catalyses the reaction UMP + ATP = UDP + ADP. It participates in pyrimidine metabolism; CTP biosynthesis via de novo pathway; UDP from UMP (UMPK route): step 1/1. With respect to regulation, allosterically activated by GTP. Inhibited by UTP. Its function is as follows. Catalyzes the reversible phosphorylation of UMP to UDP. The protein is Uridylate kinase of Desulforamulus reducens (strain ATCC BAA-1160 / DSM 100696 / MI-1) (Desulfotomaculum reducens).